Here is a 391-residue protein sequence, read N- to C-terminus: NADH-quinone oxidoreductase subunit D (391 aa).

The protein belongs to the complex I 49 kDa subunit family. In terms of assembly, NDH-1 is composed of 14 different subunits. Subunits NuoB, C, D, E, F, and G constitute the peripheral sector of the complex.

It is found in the cell inner membrane. The enzyme catalyses a quinone + NADH + 5 H(+)(in) = a quinol + NAD(+) + 4 H(+)(out). NDH-1 shuttles electrons from NADH, via FMN and iron-sulfur (Fe-S) centers, to quinones in the respiratory chain. The immediate electron acceptor for the enzyme in this species is believed to be ubiquinone. Couples the redox reaction to proton translocation (for every two electrons transferred, four hydrogen ions are translocated across the cytoplasmic membrane), and thus conserves the redox energy in a proton gradient. This Rickettsia conorii (strain ATCC VR-613 / Malish 7) protein is NADH-quinone oxidoreductase subunit D.